The primary structure comprises 111 residues: UPF0375 protein ule-4 (111 aa).

Positions methionine 1 to alanine 18 are cleaved as a signal peptide. Residues asparagine 23 and asparagine 58 are each glycosylated (N-linked (GlcNAc...) asparagine).

This sequence belongs to the UPF0375 family.

It is found in the secreted. The protein is UPF0375 protein ule-4 of Caenorhabditis elegans.